A 344-amino-acid polypeptide reads, in one-letter code: Outer membrane protein A (344 aa).

Topologically, residues 1-14 (MKAIFVLNAAPKDN) are periplasmic. The chain crosses the membrane as a beta stranded span at residues 15-24 (TWYAGGKLGW). The Extracellular portion of the chain corresponds to 25-49 (SQYHDTGFYGNGFQNNNGPTRNDQL). A beta stranded transmembrane segment spans residues 50–59 (GAGAFGGYQV). The Periplasmic segment spans residues 60 to 62 (NPY). The beta stranded transmembrane segment at 63–71 (LGFEMGYDW) threads the bilayer. Topologically, residues 72–89 (LGRMAYKGSVDNGAFKAQ) are extracellular. Residues 90–100 (GVQLTAKLGYP) traverse the membrane as a beta stranded segment. Topologically, residues 101-104 (ITDD) are periplasmic. A beta stranded transmembrane segment spans residues 105-114 (LDIYTRLGGM). The Extracellular portion of the chain corresponds to 115–139 (VWRADSKGNYASTGVSRSEHDTGVS). A beta stranded transmembrane segment spans residues 140–149 (PVFAGGVEWA). The Periplasmic portion of the chain corresponds to 150–153 (VTRD). Residues 154 to 162 (IATRLEYQW) form a beta stranded membrane-spanning segment. The Extracellular portion of the chain corresponds to 163 to 179 (VNNIGDAGTVGTRPDNG). The chain crosses the membrane as a beta stranded span at residues 180–188 (MLSLGVSYR). Residues 189-344 (FGQEDAAPVV…YKEVVTQPQA (156 aa)) lie on the Periplasmic side of the membrane. A run of 4 repeats spans residues 199–200 (AP), 201–202 (AP), 203–204 (AP), and 205–206 (AP). The segment at 199-206 (APAPAPAP) is 4 X 2 AA tandem repeats of A-P. One can recognise an OmpA-like domain in the interval 208–336 (VATKHFTLKS…RVEIEVKGYK (129 aa)). An intrachain disulfide couples cysteine 309 to cysteine 321.

Belongs to the outer membrane OOP (TC 1.B.6) superfamily. OmpA family. As to quaternary structure, monomer and homodimer.

The protein resides in the cell outer membrane. With TolR probably plays a role in maintaining the position of the peptidoglycan cell wall in the periplasm. Acts as a porin with low permeability that allows slow penetration of small solutes; an internal gate slows down solute passage. Functionally, required for conjugation with F-type plasmids; probably serves as the mating receptor on recipient cells. The sequence is that of Outer membrane protein A from Klebsiella pneumoniae.